Consider the following 873-residue polypeptide: Sister chromatid cohesion protein PDS5 homolog C (873 aa).

HEAT repeat units lie at residues 53–92, 99–136, 149–187, and 189–227; these read NALTPLMKGLVGGKLFKHSDVDVKVAVAACISEITRITAP, DQMKEVFKLIVSSFEDLVDKSSRSYAKRISILETVAKV, ALLIEMFQHFLKAIRDHHSGNVFSSMENIMTLVLEESED, and PSEMLSPILHSVKKDDEISQVSRRLAEQVLSNCASKLKT. Residues 266-301 show a composition bias toward basic and acidic residues; it reads NEKEDSQGHIKRETEVEKAAEISTPERTDAPKDESG. Disordered regions lie at residues 266 to 611 and 658 to 873; these read NEKE…LVGS and SPLD…KRKR. The residue at position 289 (threonine 289) is a Phosphothreonine. Residues 303–319 show a composition bias toward polar residues; it reads SGVSNGVAQQNDSSVDT. A compositionally biased stretch (basic and acidic residues) spans 320–334; the sequence is DSMKKQDDTGAKDEP. The span at 336–348 shows a compositional bias: polar residues; it reads QLDNPRNTDLNNT. 2 stretches are compositionally biased toward basic and acidic residues: residues 349 to 365 and 373 to 394; these read TEEKPDVEHQIEEKENE and DLSKDSDIKEETEPAELLDSKD. Composition is skewed to polar residues over residues 400 to 411 and 418 to 438; these read PVDSSVTAATSS and SVQILPSKTSGDETANVSSPS. The span at 456–466 shows a compositional bias: basic and acidic residues; that stretch reads KKKESSTEEVK. Positions 494–510 are enriched in low complexity; it reads KVASSSKTKPTVPPSKK. 2 stretches are compositionally biased toward basic and acidic residues: residues 511–526 and 535–555; these read STSETKVAKQSEKKVV and TKPKEEKKKPGRGKAIDEESL. Residues 661-681 show a composition bias toward acidic residues; sequence DESELSQDEEAADQTGQEEDA. A compositionally biased stretch (low complexity) spans 701-725; it reads SSAKKGSGAGSSKAKATPASKSSKT. Residues 726–746 are compositionally biased toward basic and acidic residues; that stretch reads SQDDKTASKSKDSKEASREEE. Residues 747 to 757 are compositionally biased toward acidic residues; the sequence is ASSEEESEEEE. Low complexity-rich tracts occupy residues 795 to 814 and 822 to 831; these read KATTSSKSKSGPVKSVPAKS and KSGSASTPAS. Residues 844–853 show a composition bias toward basic and acidic residues; sequence ETPKEPEPAT. The span at 854–866 shows a compositional bias: low complexity; that stretch reads KAKSGKSQGSQSK.

The protein belongs to the PDS5 family. As to quaternary structure, interacts with the cohesin complex.

Its subcellular location is the nucleus. In terms of biological role, cohesin cofactor dispensable during the meiotic division but playing an important role in DNA repair by homologous recombination (HR) probably by helping SMC5/SMC6 complex. Regulator of sister chromatid cohesion in mitosis which may stabilize cohesin complex association with chromatin. May couple sister chromatid cohesion during mitosis to DNA replication. Cohesion ensures that chromosome partitioning is accurate in both meiotic and mitotic cells and plays an important role in DNA repair. This chain is Sister chromatid cohesion protein PDS5 homolog C, found in Arabidopsis thaliana (Mouse-ear cress).